A 340-amino-acid chain; its full sequence is MTNKNAYAQSGVDVEAGYEVVERIKKHVARTERAGVMGALGGFGGMFDLSKTGVKEPVLISGTDGVGTKLMLAIKYDKHDTIGQDCVAMCVNDIIAAGAEPLYFLDYVATXKNEPAKLEQVVAGVAEGCVQAGAALIGGETAEMPGMYGEDDYDLAGFAVGVAEKSQIIDGSKVVEGDVLLGLVSSGIHSNGYSLVRRVFADYTGEEVLPELEGKKLKEVLLEPTRIYVKAVLPLIKEELVNGIAHITGGGFIENVPRMFADDLAAEIDESKVPVLPIFKALEKYGQIKHEEMFEIFNMGVGLMLAVSPENVERVKELLDEAVYEIGRIVKKENESVIIK.

It belongs to the AIR synthase family.

It is found in the cytoplasm. The catalysed reaction is 2-formamido-N(1)-(5-O-phospho-beta-D-ribosyl)acetamidine + ATP = 5-amino-1-(5-phospho-beta-D-ribosyl)imidazole + ADP + phosphate + H(+). It functions in the pathway purine metabolism; IMP biosynthesis via de novo pathway; 5-amino-1-(5-phospho-D-ribosyl)imidazole from N(2)-formyl-N(1)-(5-phospho-D-ribosyl)glycinamide: step 2/2. The chain is Phosphoribosylformylglycinamidine cyclo-ligase from Streptococcus pneumoniae serotype 19F (strain G54).